The sequence spans 225 residues: Ribonuclease T (225 aa).

The disordered stretch occupies residues 1 to 21; that stretch reads MSEDHFDEEHEGHGGGGGSRH. In terms of domain architecture, Exonuclease spans 33–207; sequence VVVDVETGGF…YDTEKTAELF (175 aa). Residues aspartate 36, glutamate 38, histidine 194, and aspartate 199 each coordinate Mg(2+). Residue histidine 194 is the Proton donor/acceptor of the active site.

This sequence belongs to the RNase T family. As to quaternary structure, homodimer. The cofactor is Mg(2+).

Functionally, trims short 3' overhangs of a variety of RNA species, leaving a one or two nucleotide 3' overhang. Responsible for the end-turnover of tRNA: specifically removes the terminal AMP residue from uncharged tRNA (tRNA-C-C-A). Also appears to be involved in tRNA biosynthesis. This Pseudomonas syringae pv. tomato (strain ATCC BAA-871 / DC3000) protein is Ribonuclease T.